The sequence spans 632 residues: MAU2 chromatid cohesion factor homolog (632 aa).

TPR repeat units follow at residues 453-486 and 493-526; these read GGFYYVQGLHAFHKNSFHEAKRFLRETLKMANAE and SCSLVLLSHVFLSIGNSKESMNMVTPAMQLASKI.

Belongs to the SCC4/mau-2 family. Interacts with Nipped-B to form the cohesin loading complex.

It is found in the nucleus. It localises to the nucleoplasm. In terms of biological role, required for association of the cohesin complex with chromatin during interphase. Plays a role in sister chromatid cohesion and normal progression through prometaphase. This Drosophila yakuba (Fruit fly) protein is MAU2 chromatid cohesion factor homolog.